Here is a 141-residue protein sequence, read N- to C-terminus: Large ribosomal subunit protein uL11 (141 aa).

This sequence belongs to the universal ribosomal protein uL11 family. As to quaternary structure, part of the ribosomal stalk of the 50S ribosomal subunit. Interacts with L10 and the large rRNA to form the base of the stalk. L10 forms an elongated spine to which L12 dimers bind in a sequential fashion forming a multimeric L10(L12)X complex. Post-translationally, one or more lysine residues are methylated.

In terms of biological role, forms part of the ribosomal stalk which helps the ribosome interact with GTP-bound translation factors. In Streptococcus pneumoniae (strain Hungary19A-6), this protein is Large ribosomal subunit protein uL11.